The primary structure comprises 336 residues: Dihydroorotate dehydrogenase (quinone) (336 aa).

FMN is bound by residues 62 to 66 (AGLDK) and T86. A substrate-binding site is contributed by K66. Position 111–115 (111–115 (NRMGF)) interacts with substrate. 2 residues coordinate FMN: N139 and N172. Residue N172 coordinates substrate. S175 serves as the catalytic Nucleophile. N177 is a substrate binding site. K217 and T245 together coordinate FMN. 246–247 (NT) contacts substrate. Residues G268, G297, and 318 to 319 (YS) each bind FMN.

This sequence belongs to the dihydroorotate dehydrogenase family. Type 2 subfamily. In terms of assembly, monomer. FMN serves as cofactor.

Its subcellular location is the cell membrane. The catalysed reaction is (S)-dihydroorotate + a quinone = orotate + a quinol. It functions in the pathway pyrimidine metabolism; UMP biosynthesis via de novo pathway; orotate from (S)-dihydroorotate (quinone route): step 1/1. Its function is as follows. Catalyzes the conversion of dihydroorotate to orotate with quinone as electron acceptor. The polypeptide is Dihydroorotate dehydrogenase (quinone) (Escherichia coli (strain SE11)).